A 334-amino-acid polypeptide reads, in one-letter code: D-fructose 1,6-bisphosphatase class 2/sedoheptulose 1,7-bisphosphatase (334 aa).

Mn(2+)-binding residues include Asp-33, Glu-57, Asp-85, and Glu-88. Residues Glu-88–Thr-90, Tyr-119, Arg-164–Arg-166, and Asp-186–Asp-188 each bind substrate. Glu-213 contributes to the Mn(2+) binding site.

The protein belongs to the FBPase class 2 family. Homotetramer. Requires Mn(2+) as cofactor.

The enzyme catalyses beta-D-fructose 1,6-bisphosphate + H2O = beta-D-fructose 6-phosphate + phosphate. The catalysed reaction is D-sedoheptulose 1,7-bisphosphate + H2O = D-sedoheptulose 7-phosphate + phosphate. Its pathway is carbohydrate biosynthesis; Calvin cycle. In terms of biological role, catalyzes the hydrolysis of fructose 1,6-bisphosphate (Fru 1,6-P2) and sedoheptulose 1,7-bisphosphate (Sed 1,7-P2) to fructose 6-phosphate and sedoheptulose 7-phosphate, respectively. The sequence is that of D-fructose 1,6-bisphosphatase class 2/sedoheptulose 1,7-bisphosphatase from Synechococcus sp. (strain RCC307).